A 199-amino-acid polypeptide reads, in one-letter code: NAD(P)H dehydrogenase (quinone) (199 aa).

One can recognise a Flavodoxin-like domain in the interval 4–190 (VLVLYYSAYG…AGARYQGKTI (187 aa)). Residues 10 to 15 (SAYGHI) and 78 to 80 (TRF) each bind FMN. Tyr12 lines the NAD(+) pocket. Substrate is bound at residue Trp98. FMN is bound by residues 113–119 (STATQHG) and His134.

This sequence belongs to the WrbA family. FMN is required as a cofactor.

The catalysed reaction is a quinone + NADH + H(+) = a quinol + NAD(+). It carries out the reaction a quinone + NADPH + H(+) = a quinol + NADP(+). The chain is NAD(P)H dehydrogenase (quinone) from Rhodopseudomonas palustris (strain BisB5).